Consider the following 634-residue polypeptide: Threonine--tRNA ligase (634 aa).

Positions 1 to 61 (MINIRFPDGS…NSNCELRLIT (61 aa)) constitute a TGS domain. A catalytic region spans residues 241-532 (DHRKIGKVLD…LIEHYAGNLP (292 aa)). The Zn(2+) site is built by C332, H383, and H509.

Belongs to the class-II aminoacyl-tRNA synthetase family. Homodimer. Requires Zn(2+) as cofactor.

Its subcellular location is the cytoplasm. It catalyses the reaction tRNA(Thr) + L-threonine + ATP = L-threonyl-tRNA(Thr) + AMP + diphosphate + H(+). In terms of biological role, catalyzes the attachment of threonine to tRNA(Thr) in a two-step reaction: L-threonine is first activated by ATP to form Thr-AMP and then transferred to the acceptor end of tRNA(Thr). Also edits incorrectly charged L-seryl-tRNA(Thr). In Francisella tularensis subsp. holarctica (strain FTNF002-00 / FTA), this protein is Threonine--tRNA ligase.